An 81-amino-acid polypeptide reads, in one-letter code: Putative membrane protein insertion efficiency factor (81 aa).

Residues 60–81 (WNPGGYDPVPTHNTSNSSPMAE) are disordered. A compositionally biased stretch (polar residues) spans 70–81 (THNTSNSSPMAE).

Belongs to the UPF0161 family.

It is found in the cell inner membrane. Its function is as follows. Could be involved in insertion of integral membrane proteins into the membrane. The chain is Putative membrane protein insertion efficiency factor from Stutzerimonas stutzeri (strain A1501) (Pseudomonas stutzeri).